The sequence spans 194 residues: Peptidyl-tRNA hydrolase (194 aa).

Tyr-17 is a binding site for tRNA. His-22 (proton acceptor) is an active-site residue. Positions 68, 70, and 116 each coordinate tRNA.

Belongs to the PTH family. In terms of assembly, monomer.

Its subcellular location is the cytoplasm. It catalyses the reaction an N-acyl-L-alpha-aminoacyl-tRNA + H2O = an N-acyl-L-amino acid + a tRNA + H(+). In terms of biological role, hydrolyzes ribosome-free peptidyl-tRNAs (with 1 or more amino acids incorporated), which drop off the ribosome during protein synthesis, or as a result of ribosome stalling. Functionally, catalyzes the release of premature peptidyl moieties from peptidyl-tRNA molecules trapped in stalled 50S ribosomal subunits, and thus maintains levels of free tRNAs and 50S ribosomes. The chain is Peptidyl-tRNA hydrolase from Haemophilus influenzae (strain PittGG).